A 102-amino-acid chain; its full sequence is Gastrin/cholecystokinin-like peptide (102 aa).

A signal peptide spans 1–20 (MDKKVCVSILLAMLAIAALC). Residues 21–45 (RPMTELESARHGAQRKNSISDVSRR) constitute a propeptide that is removed on maturation. Position 86 is a sulfotyrosine (tyrosine 86). Phenylalanine amide is present on phenylalanine 92. Positions 96 to 102 (SSEVTES) are excised as a propeptide.

Belongs to the gastrin/cholecystokinin family. Expressed in antrum, duodenum, colon, pancreas, brain and testis. No expression found in kidney, lung, liver, skin or distal two-thirds of small intestine. In the brain, strongly expressed in the pituitary gland with moderate expression in the neural lobe, brain stem and hypothalamus.

It is found in the secreted. Its function is as follows. May control digestion processes. This chain is Gastrin/cholecystokinin-like peptide (GAST), found in Aquarana catesbeiana (American bullfrog).